We begin with the raw amino-acid sequence, 369 residues long: Cobalt-precorrin-5B C(1)-methyltransferase (369 aa).

Belongs to the CbiD family.

It catalyses the reaction Co-precorrin-5B + S-adenosyl-L-methionine = Co-precorrin-6A + S-adenosyl-L-homocysteine. It functions in the pathway cofactor biosynthesis; adenosylcobalamin biosynthesis; cob(II)yrinate a,c-diamide from sirohydrochlorin (anaerobic route): step 6/10. Catalyzes the methylation of C-1 in cobalt-precorrin-5B to form cobalt-precorrin-6A. The chain is Cobalt-precorrin-5B C(1)-methyltransferase from Leptospira borgpetersenii serovar Hardjo-bovis (strain JB197).